The following is a 270-amino-acid chain: Chromo domain-containing protein cec-4 (270 aa).

2 disordered regions span residues 1–24 (MAKK…ETSK) and 143–229 (KIAQ…KNDV). One can recognise a Chromo domain in the interval 87 to 147 (YAVERVLAHR…HQEDLKIAQT (61 aa)). Basic residues-rich tracts occupy residues 151–167 (TPSK…KRRA) and 187–197 (TPKQSTKKLKR). Basic and acidic residues predominate over residues 205-229 (LVEKSKKKAIPDLENHTLDQEKNDV).

As to quaternary structure, interacts with mono-, di- and tri-methylated 'Lys-9' residues on histone H3. Weakly interacts with methylated 'Lys-37' residues on histone H3.

It localises to the nucleus inner membrane. Its subcellular location is the membrane. Its function is as follows. Chromatin anchor protein which binds to methylated lysine residues on histone H3, thereby recruiting heterochromatin to the nuclear periphery, especially in embryonic cells, with a lesser role in differentiated cells. May be required for the correct positioning of chromatin and nucleoli in embryos. This chain is Chromo domain-containing protein cec-4, found in Caenorhabditis elegans.